The sequence spans 313 residues: Putative S-adenosyl-L-methionine-dependent methyltransferase MAV_5149 (313 aa).

S-adenosyl-L-methionine is bound by residues Asp135 and Asp164–Leu165.

This sequence belongs to the UPF0677 family.

Its function is as follows. Exhibits S-adenosyl-L-methionine-dependent methyltransferase activity. The chain is Putative S-adenosyl-L-methionine-dependent methyltransferase MAV_5149 from Mycobacterium avium (strain 104).